The primary structure comprises 158 residues: 6,7-dimethyl-8-ribityllumazine synthase (158 aa).

5-amino-6-(D-ribitylamino)uracil contacts are provided by residues phenylalanine 23, 61 to 63, and 85 to 87; these read SME and AVI. Residue 90-91 participates in (2S)-2-hydroxy-3-oxobutyl phosphate binding; it reads DT. Histidine 93 serves as the catalytic Proton donor. Tyrosine 118 lines the 5-amino-6-(D-ribitylamino)uracil pocket. Arginine 132 contributes to the (2S)-2-hydroxy-3-oxobutyl phosphate binding site.

Belongs to the DMRL synthase family.

The catalysed reaction is (2S)-2-hydroxy-3-oxobutyl phosphate + 5-amino-6-(D-ribitylamino)uracil = 6,7-dimethyl-8-(1-D-ribityl)lumazine + phosphate + 2 H2O + H(+). It functions in the pathway cofactor biosynthesis; riboflavin biosynthesis; riboflavin from 2-hydroxy-3-oxobutyl phosphate and 5-amino-6-(D-ribitylamino)uracil: step 1/2. Functionally, catalyzes the formation of 6,7-dimethyl-8-ribityllumazine by condensation of 5-amino-6-(D-ribitylamino)uracil with 3,4-dihydroxy-2-butanone 4-phosphate. This is the penultimate step in the biosynthesis of riboflavin. The protein is 6,7-dimethyl-8-ribityllumazine synthase of Prochlorococcus marinus (strain MIT 9211).